Reading from the N-terminus, the 514-residue chain is Protein translocase subunit SecD (514 aa).

5 helical membrane-spanning segments follow: residues 7–27, 357–377, 389–409, 448–470, and 482–502; these read WKIF…LPNF, IIGF…LGLF, VLAL…AGII, FATI…IFGV, and IGII…IDIW.

It belongs to the SecD/SecF family. SecD subfamily. Forms a complex with SecF. Part of the essential Sec protein translocation apparatus which comprises SecA, SecYEG and auxiliary proteins SecDF-YajC and YidC.

The protein resides in the cell inner membrane. Functionally, part of the Sec protein translocase complex. Interacts with the SecYEG preprotein conducting channel. SecDF uses the proton motive force (PMF) to complete protein translocation after the ATP-dependent function of SecA. The polypeptide is Protein translocase subunit SecD (Rickettsia bellii (strain RML369-C)).